We begin with the raw amino-acid sequence, 200 residues long: uncharacterized protein (200 aa).

This is an uncharacterized protein from Treponema pallidum (strain Nichols).